The chain runs to 508 residues: Dihydroniloticin synthase CYP71CD4 (508 aa).

Residues 6–26 (LDFFSVTSFIIFFLFLFRLVW) traverse the membrane as a helical segment. Residue cysteine 449 participates in heme binding.

Belongs to the cytochrome P450 family. The cofactor is heme. Mainly expressed in roots and, to a lesser extent, in stems.

The protein resides in the membrane. The catalysed reaction is tirucalla-7,24-dien-3beta-ol + 2 reduced [NADPH--hemoprotein reductase] + 2 O2 = dihydroniloticin + 2 oxidized [NADPH--hemoprotein reductase] + 2 H2O + 2 H(+). It functions in the pathway secondary metabolite biosynthesis; terpenoid biosynthesis. Functionally, monooxygenase involved in the biosynthesis of quassinoids triterpene natural products such as ailanthone, chaparrinone, glaucarubinone and amarolide, allelopathic degraded triterpene lactones inhibiting the growth of other plants, and possessing antimalarial, antifeedant, insecticidal, anti-inflammatory and anticancer activities. Catalyzes the conversion of tirucalladienol to dihydroniloticin. This chain is Dihydroniloticin synthase CYP71CD4, found in Ailanthus altissima (Tree-of-heaven).